A 164-amino-acid chain; its full sequence is Neurotrophin-3 (164 aa).

A signal peptide spans 1-3 (IQS). Positions 4-118 (TSMDQGBLSE…GLNRTSRRKR (115 aa)) are excised as a propeptide. Residues 89-126 (LLSENTPLEPPPLYLTEEPMGLNRTSRRKRFAEGKSHR) form a disordered region. An N-linked (GlcNAc...) asparagine glycan is attached at N111.

This sequence belongs to the NGF-beta family.

It is found in the secreted. Its function is as follows. Seems to promote the survival of visceral and proprioceptive sensory neurons. The polypeptide is Neurotrophin-3 (NTF3) (Cylindrophis ruffus (Red-tailed pipe snake)).